Consider the following 180-residue polypeptide: 5'(3')-deoxyribonucleotidase (180 aa).

Asp9 acts as the Nucleophile in catalysis. The Mg(2+) site is built by Asp9, Asp11, and Asp134. The Proton donor role is filled by Asp11.

Belongs to the 5'(3')-deoxyribonucleotidase family. Mg(2+) is required as a cofactor.

In terms of biological role, dephosphorylates nucleoside monophosphates such as the 5' and 2'(3')-phosphates of deoxyribonucleotides in vitro. This Clostridium acetobutylicum (strain ATCC 824 / DSM 792 / JCM 1419 / IAM 19013 / LMG 5710 / NBRC 13948 / NRRL B-527 / VKM B-1787 / 2291 / W) protein is 5'(3')-deoxyribonucleotidase.